Here is a 144-residue protein sequence, read N- to C-terminus: Tryparedoxin (144 aa).

The 143-residue stretch at 2–144 (SGLAKYLPGA…PDGANFPWPN (143 aa)) folds into the Thioredoxin domain. C40 and C43 are joined by a disulfide.

Belongs to the thioredoxin family.

In terms of biological role, acts as a thiol-disulfide oxidoreductase. It is spontaneously reduced by trypanothione. This chain is Tryparedoxin, found in Trypanosoma brucei brucei.